The sequence spans 423 residues: MTNKNAFLEAKTYIPGGVDSPVRAFGSVGSDPVFIDHGNGEFLYDIEGNEYIDYVLSWGPLIFGHCDSDIEEAVIKTAKKGLSFGAPCLLETALAKLVLSKFPWLGKIRFVSSGTEATMSAIRLARGYSKKNGIIKFEGCYHGHSDSLLVKAGSGATTFGYSSSLGVPEDIVKNTHIAIYNDIQSVEQCFKNEDIGVIIVEPIAGNMGLVPADQVFLDALRKLCDEYGAVLIFDEVMSGFRASATGSYEFNKIQADIITFGKVIGGGMSAAAFAAKNEIMEMISPLGGVYQAGTLSGNPVAMAAGLASLSKIYNSPNLYKDLENKSKFIVEALENSAKKAGIALQTEVRGSMWGYFFNDRPVKNYKDALNSDTKMFAKFHAQMIKRGIYLAPSQFETGFVCDKLSQKSLEKTANAIEESFKAL.

N6-(pyridoxal phosphate)lysine is present on Lys262.

It belongs to the class-III pyridoxal-phosphate-dependent aminotransferase family. HemL subfamily. In terms of assembly, homodimer. It depends on pyridoxal 5'-phosphate as a cofactor.

The protein localises to the cytoplasm. It carries out the reaction (S)-4-amino-5-oxopentanoate = 5-aminolevulinate. It participates in porphyrin-containing compound metabolism; protoporphyrin-IX biosynthesis; 5-aminolevulinate from L-glutamyl-tRNA(Glu): step 2/2. This chain is Glutamate-1-semialdehyde 2,1-aminomutase, found in Campylobacter fetus subsp. fetus (strain 82-40).